A 561-amino-acid polypeptide reads, in one-letter code: Lengsin (561 aa).

Disordered regions lie at residues 1–78 and 91–112; these read MNDE…WHNA and SLPSAGAPDAEFNPNTDHTRDN. Over residues 26–37 the composition is skewed to basic residues; the sequence is NKLKRTRRKVTK. The span at 50–63 shows a compositional bias: polar residues; it reads MANSREMSRNQTAD. The 95-residue stretch at 135–229 folds into the GS beta-grasp domain; the sequence is NHLQFVRFEA…VICDTFTVTG (95 aa). The GS catalytic domain occupies 236–561; sequence PRYIAKRQLR…EGNKFLEYFI (326 aa).

It belongs to the glutamine synthetase family. As to quaternary structure, dodecamer. Interacts with BFSP2 and VIM. As to expression, expressed in lens.

Its function is as follows. May act as a component of the cytoskeleton or as a chaperone for the reorganization of intermediate filament proteins during terminal differentiation in the lens. Does not seem to have enzymatic activity. The sequence is that of Lengsin (Lgsn) from Rattus norvegicus (Rat).